The sequence spans 71 residues: Small ribosomal subunit protein bS21 (71 aa).

Residues 48-59 (EKASLAKRHAKR) show a composition bias toward basic residues. The disordered stretch occupies residues 48–71 (EKASLAKRHAKRNFRENARNTRLY). A compositionally biased stretch (basic and acidic residues) spans 60–71 (NFRENARNTRLY).

This sequence belongs to the bacterial ribosomal protein bS21 family.

This Glaesserella parasuis serovar 5 (strain SH0165) (Haemophilus parasuis) protein is Small ribosomal subunit protein bS21.